The sequence spans 196 residues: Protein/nucleic acid deglycase 3 (196 aa).

The active-site Nucleophile is the Cys106. Cys106 carries the post-translational modification Cysteine sulfinic acid (-SO2H); alternate.

The protein belongs to the peptidase C56 family. In terms of assembly, homodimer. Cys-106 is easily oxidized to sulfinic acid.

It catalyses the reaction N(omega)-(1-hydroxy-2-oxopropyl)-L-arginyl-[protein] + H2O = lactate + L-arginyl-[protein] + H(+). The catalysed reaction is N(6)-(1-hydroxy-2-oxopropyl)-L-lysyl-[protein] + H2O = lactate + L-lysyl-[protein] + H(+). The enzyme catalyses S-(1-hydroxy-2-oxopropyl)-L-cysteinyl-[protein] + H2O = lactate + L-cysteinyl-[protein] + H(+). It carries out the reaction N(omega)-(1-hydroxy-2-oxoethyl)-L-arginyl-[protein] + H2O = L-arginyl-[protein] + glycolate + H(+). It catalyses the reaction N(6)-(1-hydroxy-2-oxoethyl)-L-lysyl-[protein] + H2O = glycolate + L-lysyl-[protein] + H(+). The catalysed reaction is S-(1-hydroxy-2-oxoethyl)-L-cysteinyl-[protein] + H2O = glycolate + L-cysteinyl-[protein] + H(+). The enzyme catalyses N(2)-(1-hydroxy-2-oxopropyl)-dGTP + H2O = lactate + dGTP + H(+). It carries out the reaction N(2)-(1-hydroxy-2-oxopropyl)-GTP + H2O = lactate + GTP + H(+). It catalyses the reaction N(2)-(1-hydroxy-2-oxopropyl)-GDP + H2O = lactate + GDP + H(+). The catalysed reaction is N(2)-(1-hydroxy-2-oxopropyl)-GMP + H2O = lactate + GMP + H(+). The enzyme catalyses N(2)-(1-hydroxy-2-oxoethyl)-dGTP + H2O = dGTP + glycolate + H(+). It carries out the reaction N(2)-(1-hydroxy-2-oxoethyl)-GTP + H2O = glycolate + GTP + H(+). It catalyses the reaction N(2)-(1-hydroxy-2-oxoethyl)-GDP + H2O = glycolate + GDP + H(+). The catalysed reaction is N(2)-(1-hydroxy-2-oxoethyl)-GMP + H2O = glycolate + GMP + H(+). The enzyme catalyses an N(2)-(1-hydroxy-2-oxopropyl)-guanosine in RNA + H2O = a guanosine in RNA + lactate + H(+). It carries out the reaction an N(2)-(1-hydroxy-2-oxopropyl)-2'-deoxyguanosine in DNA + H2O = a 2'-deoxyguanosine in DNA + lactate + H(+). It catalyses the reaction an N(2)-(1-hydroxy-2-oxoethyl)-guanosine in RNA + H2O = a guanosine in RNA + glycolate + H(+). The catalysed reaction is an N(2)-(1-hydroxy-2-oxoethyl)-2'-deoxyguanosine in DNA + H2O = a 2'-deoxyguanosine in DNA + glycolate + H(+). With respect to regulation, glyoxalase activity is inhibited by zinc ions. Active as a chaperone in both its reduced and oxidized states, and is more active in its oxidized form. Protein and nucleotide deglycase that catalyzes the deglycation of the Maillard adducts formed between amino groups of proteins or nucleotides and reactive carbonyl groups of glyoxals. Thus, functions as a protein deglycase that repairs methylglyoxal- and glyoxal-glycated proteins, and releases repaired proteins and lactate or glycolate, respectively. Deglycates cysteine, arginine and lysine residues in proteins, and thus reactivates these proteins by reversing glycation by glyoxals. Is able to repair glycated serum albumin, collagen, glyceraldehyde-3-phosphate dehydrogenase, and fructose biphosphate aldolase. Acts on early glycation intermediates (hemithioacetals and aminocarbinols), preventing the formation of Schiff bases and advanced glycation endproducts (AGE) that cause irreversible damage. Also functions as a nucleotide deglycase able to repair glycated guanine in the free nucleotide pool (GTP, GDP, GMP, dGTP) and in DNA and RNA. Is thus involved in a major nucleotide repair system named guanine glycation repair (GG repair), dedicated to reversing methylglyoxal and glyoxal damage via nucleotide sanitization and direct nucleic acid repair. However, is less efficient than Hsp31 and YhbO, suggesting that YajL might be preferentially dedicated to protein repair. Displays a covalent chaperone activity with sulfenylated thiol proteins by forming mixed disulfides with members of the thiol proteome, and preferentially with sulfenylated cellular proteins, upon oxidative stress; these mixed disulfides can be subsequently reduced by low-molecular-weight thiols to regenerate YajL and reduced proteins. Involved in biogenesis of ribosomal proteins, probably as a ribosomal protein-folding chaperone. Confers resistance to oxidative stress. Plays an important role in protection against electrophile/carbonyl stress. The chaperone activity reported for YajL is probably recruited to execute its deglycase activity, to interact with non-native glycated proteins and gain access to partially buried glycated sites. Also displays an apparent glyoxalase activity that in fact reflects its deglycase activity. This is Protein/nucleic acid deglycase 3 (yajL) from Escherichia coli (strain K12).